The chain runs to 111 residues: Large ribosomal subunit protein uL22 (111 aa).

The protein belongs to the universal ribosomal protein uL22 family. Part of the 50S ribosomal subunit.

Its function is as follows. This protein binds specifically to 23S rRNA; its binding is stimulated by other ribosomal proteins, e.g. L4, L17, and L20. It is important during the early stages of 50S assembly. It makes multiple contacts with different domains of the 23S rRNA in the assembled 50S subunit and ribosome. In terms of biological role, the globular domain of the protein is located near the polypeptide exit tunnel on the outside of the subunit, while an extended beta-hairpin is found that lines the wall of the exit tunnel in the center of the 70S ribosome. This Francisella philomiragia subsp. philomiragia (strain ATCC 25017 / CCUG 19701 / FSC 153 / O#319-036) protein is Large ribosomal subunit protein uL22.